We begin with the raw amino-acid sequence, 268 residues long: Glutamate racemase (268 aa).

Substrate contacts are provided by residues 9–10 and 41–42; these read DS and YG. Residue C73 is the Proton donor/acceptor of the active site. 74–75 serves as a coordination point for substrate; that stretch reads NS. C183 serves as the catalytic Proton donor/acceptor. A substrate-binding site is contributed by 184–185; it reads TH.

The protein belongs to the aspartate/glutamate racemases family.

It catalyses the reaction L-glutamate = D-glutamate. Its pathway is cell wall biogenesis; peptidoglycan biosynthesis. In terms of biological role, provides the (R)-glutamate required for cell wall biosynthesis. The sequence is that of Glutamate racemase from Shewanella piezotolerans (strain WP3 / JCM 13877).